Here is a 294-residue protein sequence, read N- to C-terminus: 2-dehydropantoate 2-reductase (294 aa).

NADP(+) contacts are provided by residues 10-15 (GAGALG), Arg34, Lys74, Asn98, and Ala122. Lys178 (proton donor) is an active-site residue. Residues Lys178, Asn182, Asn186, Asn196, and 243–246 (NRSS) contribute to the substrate site. Glu258 serves as a coordination point for NADP(+).

This sequence belongs to the ketopantoate reductase family.

The protein localises to the cytoplasm. It carries out the reaction (R)-pantoate + NAD(+) = 2-dehydropantoate + NADH + H(+). It catalyses the reaction (R)-pantoate + NADP(+) = 2-dehydropantoate + NADPH + H(+). It functions in the pathway cofactor biosynthesis; coenzyme A biosynthesis. Catalyzes the NAD(P)H-dependent reduction of ketopantoate into pantoic acid. The polypeptide is 2-dehydropantoate 2-reductase (Archaeoglobus fulgidus (strain ATCC 49558 / DSM 4304 / JCM 9628 / NBRC 100126 / VC-16)).